We begin with the raw amino-acid sequence, 307 residues long: Aspartate carbamoyltransferase catalytic subunit (307 aa).

R54 and T55 together coordinate carbamoyl phosphate. K83 contributes to the L-aspartate binding site. Residues R104, H132, and Q135 each contribute to the carbamoyl phosphate site. The L-aspartate site is built by R165 and R228. Positions 267 and 268 each coordinate carbamoyl phosphate.

This sequence belongs to the aspartate/ornithine carbamoyltransferase superfamily. ATCase family. Heterododecamer (2C3:3R2) of six catalytic PyrB chains organized as two trimers (C3), and six regulatory PyrI chains organized as three dimers (R2).

It carries out the reaction carbamoyl phosphate + L-aspartate = N-carbamoyl-L-aspartate + phosphate + H(+). It functions in the pathway pyrimidine metabolism; UMP biosynthesis via de novo pathway; (S)-dihydroorotate from bicarbonate: step 2/3. Catalyzes the condensation of carbamoyl phosphate and aspartate to form carbamoyl aspartate and inorganic phosphate, the committed step in the de novo pyrimidine nucleotide biosynthesis pathway. In Clostridium perfringens (strain ATCC 13124 / DSM 756 / JCM 1290 / NCIMB 6125 / NCTC 8237 / Type A), this protein is Aspartate carbamoyltransferase catalytic subunit.